The sequence spans 389 residues: Succinate--CoA ligase [ADP-forming] subunit beta (389 aa).

The 236-residue stretch at 9–244 (KEILRKYNVP…LDEEDANEIE (236 aa)) folds into the ATP-grasp domain. ATP-binding positions include Lys-46, 53-55 (GRG), Glu-99, Ala-102, and Glu-107. 2 residues coordinate Mg(2+): Asn-199 and Asp-213. Substrate-binding positions include Asn-264 and 321 to 323 (GIM).

It belongs to the succinate/malate CoA ligase beta subunit family. Heterotetramer of two alpha and two beta subunits. Requires Mg(2+) as cofactor.

It catalyses the reaction succinate + ATP + CoA = succinyl-CoA + ADP + phosphate. The enzyme catalyses GTP + succinate + CoA = succinyl-CoA + GDP + phosphate. It functions in the pathway carbohydrate metabolism; tricarboxylic acid cycle; succinate from succinyl-CoA (ligase route): step 1/1. Its function is as follows. Succinyl-CoA synthetase functions in the citric acid cycle (TCA), coupling the hydrolysis of succinyl-CoA to the synthesis of either ATP or GTP and thus represents the only step of substrate-level phosphorylation in the TCA. The beta subunit provides nucleotide specificity of the enzyme and binds the substrate succinate, while the binding sites for coenzyme A and phosphate are found in the alpha subunit. This chain is Succinate--CoA ligase [ADP-forming] subunit beta, found in Cupriavidus pinatubonensis (strain JMP 134 / LMG 1197) (Cupriavidus necator (strain JMP 134)).